The chain runs to 368 residues: Probable deoxyhypusine synthase (368 aa).

NAD(+) contacts are provided by residues 100–104, 126–128, Glu-132, and Asp-233; these read SNLVS and TAG. Spermidine is bound at residue 131-132; the sequence is EE. Residue Asp-238 coordinates spermidine. Gly-278 contributes to the NAD(+) binding site. Residue His-283 coordinates spermidine. 303-304 is an NAD(+) binding site; it reads TA. Residues 309–311 and 318–324 each bind spermidine; these read GSD and EAISWGK. Lys-324 acts as the Nucleophile in catalysis. 337–338 contributes to the NAD(+) binding site; that stretch reads EA.

The protein belongs to the deoxyhypusine synthase family. It depends on NAD(+) as a cofactor.

It carries out the reaction [eIF5A protein]-L-lysine + spermidine = [eIF5A protein]-deoxyhypusine + propane-1,3-diamine. It participates in protein modification; eIF5A hypusination. Its function is as follows. Catalyzes the NAD-dependent oxidative cleavage of spermidine and the subsequent transfer of the butylamine moiety of spermidine to the epsilon-amino group of a specific lysine residue of the eIF-5A precursor protein to form the intermediate deoxyhypusine residue. The polypeptide is Probable deoxyhypusine synthase (Drosophila melanogaster (Fruit fly)).